A 263-amino-acid polypeptide reads, in one-letter code: Small ribosomal subunit protein eS4, Y isoform 2 (263 aa).

Residues 42 to 104 (LPLIVFLRNR…TGEHFRLVYD (63 aa)) enclose the S4 RNA-binding domain.

The protein belongs to the eukaryotic ribosomal protein eS4 family.

This chain is Small ribosomal subunit protein eS4, Y isoform 2 (RPS4Y2), found in Pan troglodytes (Chimpanzee).